Here is a 724-residue protein sequence, read N- to C-terminus: Aquaglyceroporin-4 (724 aa).

Disordered stretches follow at residues 1–167 (MADE…SIRR), 248–267 (INMA…NQAD), and 302–396 (AHGL…DLDG). The Cytoplasmic segment spans residues 1–434 (MADEEIKPTS…VIRLRFREPL (434 aa)). Over residues 87–96 (LTGQVPQDND) the composition is skewed to polar residues. Residues 252-265 (QQQQQQQQQQPQNQ) are compositionally biased toward low complexity. Composition is skewed to polar residues over residues 307-325 (SPTN…TAPS) and 360-370 (PSQTSQNSQNE). Residues 435-455 (AELLAVTCQLTLGFCADLVVV) traverse the membrane as a helical segment. At 456 to 472 (TSGKNASPAGNEATTDW) the chain is on the extracellular side. The helical transmembrane segment at 473-493 (AWGLASMLGIYIAGGISGAHL) threads the bilayer. The NPA 1 motif lies at 494-496 (NPA). At 494 to 513 (NPAISIMLWIYRGFPLRKVP) the chain is on the cytoplasmic side. Residues 514-534 (MYVLAQILGAFIAALISFGLY) traverse the membrane as a helical segment. At 535–567 (QTNIVEYGGTDLKTSDTMGAFITYPRYPWINAS) the chain is on the extracellular side. Asparagine 565 is a glycosylation site (N-linked (GlcNAc...) asparagine). Residues 568–588 (TSFFTEFVGTAILAVAVLALG) traverse the membrane as a helical segment. The Cytoplasmic segment spans residues 589 to 595 (DDMNAPP). The chain crosses the membrane as a helical span at residues 596-616 (GAGMSAFILGLVITVLSMAFG). Topologically, residues 617–647 (YNTGAALNPSRDLGPRLALAALGYGKDLFTD) are extracellular. The NPA 2 motif lies at 624-626 (NPS). Residues 648–668 (VYWIWGNWCAPILGAIFGAFL) form a helical membrane-spanning segment. At 669–724 (YDAAIFAGGESPVNYPRKRIKRAGHKWRKKWGVRLRKMKPAKKGEDEAYRRWKESQ) the chain is on the cytoplasmic side.

The protein belongs to the MIP/aquaporin (TC 1.A.8) family.

The protein localises to the membrane. The catalysed reaction is H2O(in) = H2O(out). It carries out the reaction glycerol(in) = glycerol(out). Its function is as follows. Water channel required to facilitate the transport of water across membranes. May play a role in the vegetative growth. The protein is Aquaglyceroporin-4 of Botryotinia fuckeliana (strain B05.10) (Noble rot fungus).